We begin with the raw amino-acid sequence, 431 residues long: MLQQILQDMYIDPELLAELSDVQKHILFYKMREEQLRRWREREAWDALAQAEGLRPAKVKRASNKHLQWLLGADGEVWVWVMGEGPGDKPYEEISEELIAERARLQAQKEAEELWRQKEAEITKKFRDALANEKARILAEKWKVEMEDRKAAKILEERIHEEFKRKEEEERRRGEEQIRLQEEQRAKELYWTLKQAQLHSQASENEEREWEEQLRRSKAADEERSRRAQRARDEYRRHSLRAIQKGTVAGLSTMFQELGQNHEQEARLYHQLPDTSPPSPLTGPDRTWERPLRPLSREVIVRWFKEEQLPRRAGFERNTKSIAPWFHGIISRESAEDLLENMTEGAFLVRVSEKIWGYTLSYRLQRGFKHFLVDASGDFYSFLGVDPNRHATLTDLIDFHKEEIITVSGGELLQEPCGQRDSPPDYHLLFE.

The tract at residues 201–235 (QASENEEREWEEQLRRSKAADEERSRRAQRARDEY) is disordered. Over residues 211–235 (EEQLRRSKAADEERSRRAQRARDEY) the composition is skewed to basic and acidic residues. The SH2 domain occupies 325–417 (WFHGIISRES…SGGELLQEPC (93 aa)).

This Mus musculus (Mouse) protein is SH2 domain-containing protein 4B (Sh2d4b).